The following is a 295-amino-acid chain: Mycothiol acetyltransferase (295 aa).

N-acetyltransferase domains lie at 4-138 (TEWR…RPLT) and 149-295 (VRIA…YAAN). 1D-myo-inositol 2-(L-cysteinylamino)-2-deoxy-alpha-D-glucopyranoside is bound at residue aspartate 36. Acetyl-CoA-binding positions include 77–79 (LVV) and 85–90 (RRGIGA). 3 residues coordinate 1D-myo-inositol 2-(L-cysteinylamino)-2-deoxy-alpha-D-glucopyranoside: glutamate 176, lysine 217, and glutamate 225. Acetyl-CoA is bound by residues 229 to 231 (VGV) and 236 to 242 (QGRGLGY). A 1D-myo-inositol 2-(L-cysteinylamino)-2-deoxy-alpha-D-glucopyranoside-binding site is contributed by tyrosine 266. 271–276 (NSAAVN) contacts acetyl-CoA.

Belongs to the acetyltransferase family. MshD subfamily. In terms of assembly, monomer.

It carries out the reaction 1D-myo-inositol 2-(L-cysteinylamino)-2-deoxy-alpha-D-glucopyranoside + acetyl-CoA = mycothiol + CoA + H(+). Catalyzes the transfer of acetyl from acetyl-CoA to desacetylmycothiol (Cys-GlcN-Ins) to form mycothiol. This is Mycothiol acetyltransferase (mshD) from Mycolicibacterium smegmatis (strain ATCC 700084 / mc(2)155) (Mycobacterium smegmatis).